We begin with the raw amino-acid sequence, 546 residues long: DNA ligase (546 aa).

An ATP-binding site is contributed by Glu-244. Catalysis depends on Lys-246, which acts as the N6-AMP-lysine intermediate. ATP is bound by residues Arg-251, Arg-266, Glu-295, Phe-334, Arg-405, and Lys-411.

It belongs to the ATP-dependent DNA ligase family. The cofactor is Mg(2+).

The catalysed reaction is ATP + (deoxyribonucleotide)n-3'-hydroxyl + 5'-phospho-(deoxyribonucleotide)m = (deoxyribonucleotide)n+m + AMP + diphosphate.. Functionally, DNA ligase that seals nicks in double-stranded DNA during DNA replication, DNA recombination and DNA repair. This chain is DNA ligase, found in Methanocorpusculum labreanum (strain ATCC 43576 / DSM 4855 / Z).